Reading from the N-terminus, the 130-residue chain is Small ribosomal subunit protein uS9 (130 aa).

A disordered region spans residues 108-130 (SREKERKKYGQRGARARFQYSKR).

The protein belongs to the universal ribosomal protein uS9 family.

This is Small ribosomal subunit protein uS9 from Solidesulfovibrio magneticus (strain ATCC 700980 / DSM 13731 / RS-1) (Desulfovibrio magneticus).